Reading from the N-terminus, the 341-residue chain is Ribonucleoside-diphosphate reductase small chain A (341 aa).

The interval 1–20 (MGSLKEGQGRDMEEGESEEP) is disordered. Positions 87, 118, and 121 each coordinate Fe cation. The active site involves Y125. The Fe cation site is built by E180, E214, and H217.

This sequence belongs to the ribonucleoside diphosphate reductase small chain family. In terms of assembly, homodimer and heterodimer with TSO2. Heterotetramer of two R1 and two R2 chains. A radical transfer pathway may occur between Tyr-125 of protein R2 and R1. Homodimer contains a dinuclear non-heme iron center and a stable tyrosyl radical essential for activity. A transfer pathway may occur between Tyr-125 of protein R2 and R1. Interacts with CSN7. Fe cation serves as cofactor. In terms of tissue distribution, expressed in rosette leaves, cauline leaves, stems and flowers.

The protein localises to the cytoplasm. The enzyme catalyses a 2'-deoxyribonucleoside 5'-diphosphate + [thioredoxin]-disulfide + H2O = a ribonucleoside 5'-diphosphate + [thioredoxin]-dithiol. Inhibited by phenol, paracetamol, 2,4,6-trimethylphenol, resveratrol, furfuryl mercaptan, 2-thiophenthiol, phenylhydrazine, and hydroxyurea. Functionally, provides the precursors necessary for DNA synthesis. Catalyzes the biosynthesis of deoxyribonucleotides from the corresponding ribonucleotides. In Arabidopsis thaliana (Mouse-ear cress), this protein is Ribonucleoside-diphosphate reductase small chain A (RNR2A).